The primary structure comprises 348 residues: MIEADRLIAASGRDREEVQDRAIRPLSLDDYIGQPVVREQMALFIQAARGRSESLDHTLIFGPPGLGKTTLANIIAHEMGVSVKSTSGPILERPGDLAAMLTNLEPHDVLFIDEIHRLSPVVEEVLYPAMEDFQLDIMIGEGPAARSIKLDLPPFTLVGATTRAGMLTNPLRDRFGIVQRLEFYSDKDLATIVSRSANILGLAIEDLGAYEIARRARGTPRIANRLLRRVRDYAEVRGKGQITKAVADMALNLLDVDERGFDHSDRRLLLTMIEKFDGGPVGVDNLAAAISEERHTIEDVLEPYLIQQGYIMRTPRGRVVTRHAYLHFGLNIPGRLGEGGDFSEPGDE.

A large ATPase domain (RuvB-L) region spans residues 4-184 (ADRLIAASGR…FGIVQRLEFY (181 aa)). Residues I23, R24, G65, K68, T69, T70, 131–133 (EDF), R174, Y184, and R221 contribute to the ATP site. T69 contacts Mg(2+). Residues 185–255 (SDKDLATIVS…VADMALNLLD (71 aa)) form a small ATPAse domain (RuvB-S) region. A head domain (RuvB-H) region spans residues 258-348 (ERGFDHSDRR…GGDFSEPGDE (91 aa)). DNA contacts are provided by R294, R313, and R318.

This sequence belongs to the RuvB family. In terms of assembly, homohexamer. Forms an RuvA(8)-RuvB(12)-Holliday junction (HJ) complex. HJ DNA is sandwiched between 2 RuvA tetramers; dsDNA enters through RuvA and exits via RuvB. An RuvB hexamer assembles on each DNA strand where it exits the tetramer. Each RuvB hexamer is contacted by two RuvA subunits (via domain III) on 2 adjacent RuvB subunits; this complex drives branch migration. In the full resolvosome a probable DNA-RuvA(4)-RuvB(12)-RuvC(2) complex forms which resolves the HJ.

It is found in the cytoplasm. The catalysed reaction is ATP + H2O = ADP + phosphate + H(+). The RuvA-RuvB-RuvC complex processes Holliday junction (HJ) DNA during genetic recombination and DNA repair, while the RuvA-RuvB complex plays an important role in the rescue of blocked DNA replication forks via replication fork reversal (RFR). RuvA specifically binds to HJ cruciform DNA, conferring on it an open structure. The RuvB hexamer acts as an ATP-dependent pump, pulling dsDNA into and through the RuvAB complex. RuvB forms 2 homohexamers on either side of HJ DNA bound by 1 or 2 RuvA tetramers; 4 subunits per hexamer contact DNA at a time. Coordinated motions by a converter formed by DNA-disengaged RuvB subunits stimulates ATP hydrolysis and nucleotide exchange. Immobilization of the converter enables RuvB to convert the ATP-contained energy into a lever motion, pulling 2 nucleotides of DNA out of the RuvA tetramer per ATP hydrolyzed, thus driving DNA branch migration. The RuvB motors rotate together with the DNA substrate, which together with the progressing nucleotide cycle form the mechanistic basis for DNA recombination by continuous HJ branch migration. Branch migration allows RuvC to scan DNA until it finds its consensus sequence, where it cleaves and resolves cruciform DNA. The chain is Holliday junction branch migration complex subunit RuvB from Pseudomonas putida (strain GB-1).